Consider the following 226-residue polypeptide: Enolase-phosphatase E1 (226 aa).

It belongs to the HAD-like hydrolase superfamily. MasA/MtnC family. In terms of assembly, monomer. Mg(2+) is required as a cofactor.

The enzyme catalyses 5-methylsulfanyl-2,3-dioxopentyl phosphate + H2O = 1,2-dihydroxy-5-(methylsulfanyl)pent-1-en-3-one + phosphate. The protein operates within amino-acid biosynthesis; L-methionine biosynthesis via salvage pathway; L-methionine from S-methyl-5-thio-alpha-D-ribose 1-phosphate: step 3/6. It functions in the pathway amino-acid biosynthesis; L-methionine biosynthesis via salvage pathway; L-methionine from S-methyl-5-thio-alpha-D-ribose 1-phosphate: step 4/6. Bifunctional enzyme that catalyzes the enolization of 2,3-diketo-5-methylthiopentyl-1-phosphate (DK-MTP-1-P) into the intermediate 2-hydroxy-3-keto-5-methylthiopentenyl-1-phosphate (HK-MTPenyl-1-P), which is then dephosphorylated to form the acireductone 1,2-dihydroxy-3-keto-5-methylthiopentene (DHK-MTPene). The polypeptide is Enolase-phosphatase E1 (Shewanella baltica (strain OS223)).